Reading from the N-terminus, the 387-residue chain is uncharacterized protein (387 aa).

It belongs to the geranylgeranyl reductase family. ChlP subfamily.

This is an uncharacterized protein from Methanocaldococcus jannaschii (strain ATCC 43067 / DSM 2661 / JAL-1 / JCM 10045 / NBRC 100440) (Methanococcus jannaschii).